A 237-amino-acid chain; its full sequence is Ribonuclease PH (237 aa).

Phosphate is bound by residues Arg-86 and 124 to 126 (GTR).

Belongs to the RNase PH family. In terms of assembly, homohexameric ring arranged as a trimer of dimers.

It catalyses the reaction tRNA(n+1) + phosphate = tRNA(n) + a ribonucleoside 5'-diphosphate. Functionally, phosphorolytic 3'-5' exoribonuclease that plays an important role in tRNA 3'-end maturation. Removes nucleotide residues following the 3'-CCA terminus of tRNAs; can also add nucleotides to the ends of RNA molecules by using nucleoside diphosphates as substrates, but this may not be physiologically important. Probably plays a role in initiation of 16S rRNA degradation (leading to ribosome degradation) during starvation. The polypeptide is Ribonuclease PH (Alteromonas mediterranea (strain DSM 17117 / CIP 110805 / LMG 28347 / Deep ecotype)).